The following is a 287-amino-acid chain: Shikimate dehydrogenase (NADP(+)) (287 aa).

Shikimate-binding positions include 20–22 (SRS) and Thr-67. The Proton acceptor role is filled by Lys-71. An NADP(+)-binding site is contributed by Glu-84. The shikimate site is built by Asn-93 and Asp-108. NADP(+) contacts are provided by residues 132–136 (GAGGA), 156–161 (NRTAAR), and Met-226. Residue Tyr-228 participates in shikimate binding. Gly-250 provides a ligand contact to NADP(+).

It belongs to the shikimate dehydrogenase family. As to quaternary structure, homodimer.

The enzyme catalyses shikimate + NADP(+) = 3-dehydroshikimate + NADPH + H(+). Its pathway is metabolic intermediate biosynthesis; chorismate biosynthesis; chorismate from D-erythrose 4-phosphate and phosphoenolpyruvate: step 4/7. Functionally, involved in the biosynthesis of the chorismate, which leads to the biosynthesis of aromatic amino acids. Catalyzes the reversible NADPH linked reduction of 3-dehydroshikimate (DHSA) to yield shikimate (SA). This Bordetella parapertussis (strain 12822 / ATCC BAA-587 / NCTC 13253) protein is Shikimate dehydrogenase (NADP(+)).